The chain runs to 405 residues: Acetate kinase (405 aa).

Mg(2+) is bound at residue Asn-7. Lys-14 serves as a coordination point for ATP. A substrate-binding site is contributed by Arg-98. Asp-155 (proton donor/acceptor) is an active-site residue. Residues 215–219, 289–291, and 337–341 contribute to the ATP site; these read HLGNG, DMR, and GIGEN. Residue Glu-391 coordinates Mg(2+).

This sequence belongs to the acetokinase family. In terms of assembly, homodimer. The cofactor is Mg(2+). Requires Mn(2+) as cofactor.

The protein resides in the cytoplasm. It catalyses the reaction acetate + ATP = acetyl phosphate + ADP. The protein operates within metabolic intermediate biosynthesis; acetyl-CoA biosynthesis; acetyl-CoA from acetate: step 1/2. In terms of biological role, catalyzes the formation of acetyl phosphate from acetate and ATP. Can also catalyze the reverse reaction. The sequence is that of Acetate kinase from Desulfotalea psychrophila (strain LSv54 / DSM 12343).